We begin with the raw amino-acid sequence, 411 residues long: Z-DNA-binding protein 1 (411 aa).

2 Z-binding domains span residues 8–70 and 84–148; these read LSTG…SIGG and SSAQ…HSRQ. Glycyl lysine isopeptide (Lys-Gly) (interchain with G-Cter in ubiquitin) cross-links involve residues K17 and K43. The disordered stretch occupies residues 60 to 86; sequence SPEPATWSIGGAASGDGAPAIPENSSA. 2 short sequence motifs (RIP homotypic interaction motif (RHIM)) span residues 188-205 and 237-261; these read NSNA…REKA and YIYM…LVGD. Disordered regions lie at residues 263–303 and 332–411; these read GKHP…EGDT and KGEV…LSKQ. Polar residues-rich tracts occupy residues 268–292, 350–371, and 400–411; these read YSFS…NMQT, GTSS…SMLP, and IESSQDTGLSKQ.

In terms of assembly, homodimer. Interacts (via RIP homotypic interaction motif) with RIPK3; leading to RIPK3 activation and necroptosis; interaction is enhanced by CASP6. Interacts (via RIP homotypic interaction motif) with RIPK1. Component of the AIM2 PANoptosome complex, a multiprotein complex that drives inflammatory cell death (PANoptosis). As to quaternary structure, (Microbial infection) Interacts (via RIP homotypic interaction motif) with murid herpesvirus protein RIR1 (via RIP homotypic interaction motif); leading to inhibition of ZBP1-dependent necroptosis. (Microbial infection) Interacts with vaccinia virus E3 protein; leading to inhibit ZBP1-dependent necroptosis. Post-translationally, ubiquitinated; polyubiquitinated following influenza A virus (IAV) infection. In terms of processing, phosphorylated. In terms of tissue distribution, expressed in lung, spleen and liver. Lower levels were seen in heart, kidney and testis. Expression is greatly up-regulated in tumor stromal cells and activated macrophages.

It is found in the cytoplasm. It localises to the nucleus. Its activity is regulated as follows. ZBP1-dependent necroptosis is normally inhibited by RIPK1: RIPK1 inhibits the ZBP1-induced activation of RIPK3 via FADD-mediated recruitment of CASP8, which cleaves RIPK1 and limits TNF-induced necroptosis. Functionally, key innate sensor that recognizes and binds Z-RNA structures, which are produced by a number of viruses, such as herpesvirus, orthomyxovirus or flavivirus, and triggers different forms of cell death. ZBP1 acts as an essential mediator of pyroptosis, necroptosis and apoptosis (PANoptosis), an integral part of host defense against pathogens, by activating RIPK3, caspase-8 (CASP8), and the NLRP3 inflammasome. Key activator of necroptosis, a programmed cell death process in response to death-inducing TNF-alpha family members, via its ability to bind Z-RNA: once activated upon Z-RNA-binding, ZBP1 interacts and stimulates RIPK3 kinase, which phosphorylates and activates MLKL, triggering execution of programmed necrosis. In addition to TNF-induced necroptosis, necroptosis can also take place in the nucleus in response to orthomyxoviruses infection: ZBP1 recognizes and binds Z-RNA structures that are produced in infected nuclei by orthomyxoviruses, such as the influenza A virus (IAV), leading to ZBP1 activation, RIPK3 stimulation and subsequent MLKL phosphorylation, triggering disruption of the nuclear envelope and leakage of cellular DNA into the cytosol. ZBP1-dependent cell death in response to IAV infection promotes interleukin-1 alpha (IL1A) induction in an NLRP3-inflammasome-independent manner: IL1A expression is required for the optimal interleukin-1 beta (IL1B) production, and together, these cytokines promote infiltration of inflammatory neutrophils to the lung, leading to the formation of neutrophil extracellular traps. In addition to its direct role in driving necroptosis via its ability to sense Z-RNAs, also involved in PANoptosis triggered in response to bacterial infection: component of the AIM2 PANoptosome complex, a multiprotein complex that triggers PANoptosis. Also acts as the apical sensor of fungal infection responsible for activating PANoptosis. Involved in CASP8-mediated cell death via its interaction with RIPK1 but independently of its ability to sense Z-RNAs. In some cell types, also able to restrict viral replication by promoting cell death-independent responses. In response to flavivirus infection in neurons, promotes a cell death-independent pathway that restricts viral replication: together with RIPK3, promotes a death-independent transcriptional program that modifies the cellular metabolism via up-regulation expression of the enzyme ACOD1/IRG1 and production of the metabolite itaconate. Itaconate inhibits the activity of succinate dehydrogenase, generating a metabolic state in neurons that suppresses replication of viral genomes. The protein is Z-DNA-binding protein 1 of Mus musculus (Mouse).